Reading from the N-terminus, the 68-residue chain is Large ribosomal subunit protein uL29 (68 aa).

It belongs to the universal ribosomal protein uL29 family.

This chain is Large ribosomal subunit protein uL29, found in Streptococcus gordonii (strain Challis / ATCC 35105 / BCRC 15272 / CH1 / DL1 / V288).